We begin with the raw amino-acid sequence, 167 residues long: Secreted LysM effector Blys6 (167 aa).

The first 16 residues, methionine 1–alanine 16, serve as a signal peptide directing secretion. The 54-residue stretch at lysine 109–valine 162 folds into the LysM domain.

It belongs to the secreted LysM effector family.

Might have a role in sequestration of chitin oligosaccharides (breakdown products of fungal cell walls that are released during invasion and act as triggers of host immunity) to dampen host defense. In Beauveria bassiana (strain ARSEF 2860) (White muscardine disease fungus), this protein is Secreted LysM effector Blys6.